Reading from the N-terminus, the 277-residue chain is Caspase-3 (277 aa).

Met1 is subject to N-acetylmethionine. Propeptides lie at residues 1 to 9 (MENTENSVD) and 10 to 28 (SKSIKNLEPKIIHGSQSMD). Polar residues predominate over residues 1–10 (MENTENSVDS). A disordered region spans residues 1–20 (MENTENSVDSKSIKNLEPKI). An N6-acetyllysine modification is found at Lys11. The segment covering 11-20 (KSIKNLEPKI) has biased composition (basic and acidic residues). At Ser26 the chain carries Phosphoserine. Residues His121 and Cys163 contribute to the active site. Cys163 is modified (S-nitrosocysteine; in inhibited form).

This sequence belongs to the peptidase C14A family. As to quaternary structure, heterotetramer that consists of two anti-parallel arranged heterodimers, each one formed by a 17 kDa (p17) and a 12 kDa (p12) subunit. Interacts with BIRC6/bruce. Cleavage by granzyme B, caspase-6, caspase-8 and caspase-10 generates the two active subunits. Additional processing of the propeptides is likely due to the autocatalytic activity of the activated protease. Active heterodimers between the small subunit of caspase-7 protease and the large subunit of caspase-3 also occur and vice versa. In terms of processing, S-nitrosylated on its catalytic site cysteine in unstimulated cell lines and denitrosylated upon activation of the Fas apoptotic pathway, associated with an increase in intracellular caspase activity. Fas therefore activates caspase-3 not only by inducing the cleavage of the caspase zymogen to its active subunits, but also by stimulating the denitrosylation of its active site thiol. Post-translationally, ubiquitinated by BIRC6; this activity is inhibited by DIABLO/SMAC.

The protein resides in the cytoplasm. The enzyme catalyses Strict requirement for an Asp residue at positions P1 and P4. It has a preferred cleavage sequence of Asp-Xaa-Xaa-Asp-|- with a hydrophobic amino-acid residue at P2 and a hydrophilic amino-acid residue at P3, although Val or Ala are also accepted at this position.. Inhibited by BIRC6; following inhibition of BIRC6-caspase binding by DIABLO/SMAC, BIRC6 is subjected to caspase cleavage, leading to an increase in active caspases. Involved in the activation cascade of caspases responsible for apoptosis execution. At the onset of apoptosis, it proteolytically cleaves poly(ADP-ribose) polymerase PARP1 at a '216-Asp-|-Gly-217' bond. Cleaves and activates sterol regulatory element binding proteins (SREBPs) between the basic helix-loop-helix leucine zipper domain and the membrane attachment domain. Cleaves and activates caspase-6, -7 and -9 (CASP6, CASP7 and CASP9, respectively). Cleaves and inactivates interleukin-18 (IL18). Triggers cell adhesion in sympathetic neurons through RET cleavage. Cleaves IL-1 beta between an Asp and an Ala, releasing the mature cytokine which is involved in a variety of inflammatory processes. Cleaves and inhibits serine/threonine-protein kinase AKT1 in response to oxidative stress. Acts as an inhibitor of type I interferon production during virus-induced apoptosis by mediating cleavage of antiviral proteins CGAS, IRF3 and MAVS, thereby preventing cytokine overproduction. Also involved in pyroptosis by mediating cleavage and activation of gasdermin-E (GSDME). Cleaves XRCC4 and phospholipid scramblase proteins XKR4, XKR8 and XKR9, leading to promote phosphatidylserine exposure on apoptotic cell surface. Cleaves BIRC6 following inhibition of BIRC6-caspase binding by DIABLO/SMAC. The sequence is that of Caspase-3 (CASP3) from Pan troglodytes (Chimpanzee).